Here is a 325-residue protein sequence, read N- to C-terminus: GMP reductase (325 aa).

Cysteine 174 acts as the Thioimidate intermediate in catalysis. 203–226 (IIADGGIRTNGDIAKSIRFGANMV) provides a ligand contact to NADP(+).

Belongs to the IMPDH/GMPR family. GuaC type 2 subfamily.

The enzyme catalyses IMP + NH4(+) + NADP(+) = GMP + NADPH + 2 H(+). Its function is as follows. Catalyzes the irreversible NADPH-dependent deamination of GMP to IMP. It functions in the conversion of nucleobase, nucleoside and nucleotide derivatives of G to A nucleotides, and in maintaining the intracellular balance of A and G nucleotides. The protein is GMP reductase of Latilactobacillus sakei subsp. sakei (strain 23K) (Lactobacillus sakei subsp. sakei).